The following is a 231-amino-acid chain: Glycerol-3-phosphate acyltransferase (231 aa).

Transmembrane regions (helical) follow at residues 6–26, 55–75, 95–115, 130–150, 152–172, and 196–216; these read FLFL…LVIG, WGIL…TIFL, LTMK…FSLF, IITS…AIFL, LFGY…IFLW, and LFYF…YSNI.

The protein belongs to the PlsY family. As to quaternary structure, probably interacts with PlsX.

Its subcellular location is the cell membrane. It catalyses the reaction an acyl phosphate + sn-glycerol 3-phosphate = a 1-acyl-sn-glycero-3-phosphate + phosphate. Its pathway is lipid metabolism; phospholipid metabolism. In terms of biological role, catalyzes the transfer of an acyl group from acyl-phosphate (acyl-PO(4)) to glycerol-3-phosphate (G3P) to form lysophosphatidic acid (LPA). This enzyme utilizes acyl-phosphate as fatty acyl donor, but not acyl-CoA or acyl-ACP. The polypeptide is Glycerol-3-phosphate acyltransferase (Aster yellows witches'-broom phytoplasma (strain AYWB)).